A 1454-amino-acid chain; its full sequence is ABC transporter G family member 39 (1454 aa).

The region spanning 175–448 is the ABC transporter 1 domain; that stretch reads LGFFHLLPSK…FEYFGFQCPE (274 aa). An ATP-binding site is contributed by 208–215; the sequence is GPPSSGKT. Positions 526–739 constitute an ABC transmembrane type-2 1 domain; that stretch reads ELFKACFDRE…GQTAIVMNEF (214 aa). 7 helical membrane-spanning segments follow: residues 544–564, 584–604, 623–643, 663–683, 689–709, 716–736, and 775–795; these read FVYV…MTVY, MFFS…FTVM, FALP…GIWI, LLAY…LGAI, ISNS…GFII, PWMT…AIVM, and FWIC…FYIL. Residues 812–824 are compositionally biased toward basic and acidic residues; it reads EEGKDKQKGENRG. The segment at 812-838 is disordered; the sequence is EEGKDKQKGENRGTEGSVVELNSSSNK. Positions 853 to 1106 constitute an ABC transporter 2 domain; sequence LAFNNVNYYV…LVEYFEAVEG (254 aa). An ATP-binding site is contributed by 898 to 905; it reads GVSGAGKT. Residues 1178–1392 form the ABC transmembrane type-2 2 domain; the sequence is TQTKACFWKQ…TLYGLITSQV (215 aa). Helical transmembrane passes span 1199-1219, 1231-1251, 1285-1303, 1312-1332, 1342-1362, 1367-1387, and 1423-1443; these read AIRF…FWQI, NFFG…AATV, IMYN…YSMI, FLWF…YGMM, IAGI…GFLI, IPIW…LYGL, and FLPV…FVFA.

Belongs to the ABC transporter superfamily. ABCG family. PDR (TC 3.A.1.205) subfamily.

The protein localises to the membrane. Its function is as follows. May be a general defense protein. This Arabidopsis thaliana (Mouse-ear cress) protein is ABC transporter G family member 39 (ABCG39).